The sequence spans 488 residues: Probable aldehyde dehydrogenase (488 aa).

An NAD(+)-binding site is contributed by 240 to 245 (GSSVTG). Catalysis depends on residues Glu-262 and Cys-296.

Belongs to the aldehyde dehydrogenase family.

It carries out the reaction an aldehyde + NAD(+) + H2O = a carboxylate + NADH + 2 H(+). Involved in an alpha-terpineol oxidation system. The sequence is that of Probable aldehyde dehydrogenase (terPE) from Pseudomonas sp.